A 353-amino-acid chain; its full sequence is tRNA N6-adenosine threonylcarbamoyltransferase (353 aa).

Fe cation is bound by residues His-109 and His-113. Substrate is bound by residues 136 to 140, Asp-169, Gly-182, Asp-186, and Asn-284; that span reads TVSGG. Asp-312 provides a ligand contact to Fe cation.

This sequence belongs to the KAE1 / TsaD family. It depends on Fe(2+) as a cofactor.

The protein resides in the cytoplasm. It carries out the reaction L-threonylcarbamoyladenylate + adenosine(37) in tRNA = N(6)-L-threonylcarbamoyladenosine(37) in tRNA + AMP + H(+). Required for the formation of a threonylcarbamoyl group on adenosine at position 37 (t(6)A37) in tRNAs that read codons beginning with adenine. Is involved in the transfer of the threonylcarbamoyl moiety of threonylcarbamoyl-AMP (TC-AMP) to the N6 group of A37, together with TsaE and TsaB. TsaD likely plays a direct catalytic role in this reaction. The sequence is that of tRNA N6-adenosine threonylcarbamoyltransferase from Chlorobium limicola (strain DSM 245 / NBRC 103803 / 6330).